The chain runs to 211 residues: MLSIDKHLPAPHGLAAVLVRRAPKLVLPFLARSRSRLRATLDDGREVAVVLPRGTVMRGGDVLVAEDGTLVEVQAAPEQVLRVTSDSRLALMRAAYHLGNRHTPVQVVADALQLEADPVLEDMLVRLGVTVTHVQAPFEPEAGAYGGGHRHGHDATFEEDYAAAQALYREHHGHSHDRGCDHSHSHSHDHDHDHGHVHGPGCGHAPHHRHD.

Residues glutamate 170 to aspartate 211 form a disordered region. A compositionally biased stretch (basic and acidic residues) spans histidine 176–histidine 196.

Belongs to the UreE family.

The protein resides in the cytoplasm. Involved in urease metallocenter assembly. Binds nickel. Probably functions as a nickel donor during metallocenter assembly. This chain is Urease accessory protein UreE, found in Ralstonia nicotianae (strain ATCC BAA-1114 / GMI1000) (Ralstonia solanacearum).